Reading from the N-terminus, the 493-residue chain is Cytochrome P450 monooxygenase astA (493 aa).

A helical membrane pass occupies residues 5–25; it reads EIILLGLAALAVTYQVIVWIY. N174 and N286 each carry an N-linked (GlcNAc...) asparagine glycan. C433 serves as a coordination point for heme.

This sequence belongs to the cytochrome P450 family. Heme serves as cofactor.

It localises to the membrane. It carries out the reaction asperterpenoid A + reduced [NADPH--hemoprotein reductase] + O2 = asperterpenoid C + oxidized [NADPH--hemoprotein reductase] + H2O + H(+). The protein operates within secondary metabolite biosynthesis; terpenoid biosynthesis. Cytochrome P450 monooxygenase; part of the gene cluster that mediates the biosynthesis of the asperterpenoids, sesterterpenes that exhibit anti-tuberculosis activity. The first step of the pathway is performed by the sesterterpene synthase astC that possesses both prenyl transferase and terpene cyclase activity, converting isopentenyl diphosphate and dimethylallyl diphosphate into geranylfarnesyl diphosphate (GFPP) and further converting GFPP into preasperterpenoid A, respectively. The cytochrome P450 monooxygenase astB then dually oxidizes preasperterpenoid A to produce asperterpenoid A along with a minor product, asperterpenoid B. Finally, the cytochrome P450 monooxygenase astA converts asperterpenoid A into asperterpenoid C. The polypeptide is Cytochrome P450 monooxygenase astA (Talaromyces wortmannii (Penicillium wortmannii)).